Here is a 1073-residue protein sequence, read N- to C-terminus: TSC22 domain family protein 1 (1073 aa).

The tract at residues 1–98 (MHQPPESTAA…SQAQLQAQPL (98 aa)) is required for interaction with TGFBR1 and promotion of TGF-beta signaling. Disordered stretches follow at residues 22 to 110 (MAHP…KKSG), 125 to 205 (ISSN…PHLP), 220 to 288 (LHHH…SPAS), 458 to 486 (VTSERESTSGSSVSSSVSTLSHYTESVGS), 607 to 628 (YSQAAPPVQTPLPGAPPPQQLQ), and 742 to 766 (VQQPSTQVPPSVIQQGAPPSSQVVP). A compositionally biased stretch (low complexity) spans 36–45 (GSASALNAAG). The span at 58 to 70 (FPPPSLLQPPPPA) shows a compositional bias: pro residues. Over residues 84-100 (SLNLLSQAQLQAQPLAP) the composition is skewed to low complexity. Residues 133 to 142 (EDTESYDDLD) show a composition bias toward acidic residues. Basic residues predominate over residues 220-240 (LHHHHQIHHGHHLQHGHHHPS). Residues 257–271 (PVSRKLSTTGSSDSI) show a composition bias toward polar residues. At serine 263 the chain carries Phosphoserine. 2 stretches are compositionally biased toward low complexity: residues 272-288 (TPVAPTSAVSSSGSPAS) and 465-483 (TSGSSVSSSVSTLSHYTES). The segment covering 614 to 625 (VQTPLPGAPPPQ) has biased composition (pro residues). Positions 742–764 (VQQPSTQVPPSVIQQGAPPSSQV) are enriched in polar residues. Residues 1006 to 1027 (LKEQIKELIEKNSQLEQENNLL) form a leucine-zipper region. A disordered region spans residues 1037 to 1073 (AQFQAQLQTGSPPATTQPQGTTQPPAQPASQGSGPTA). Residues 1044–1073 (QTGSPPATTQPQGTTQPPAQPASQGSGPTA) are compositionally biased toward low complexity.

Belongs to the TSC-22/Dip/Bun family. As to quaternary structure, forms homodimers. Forms heterodimers. Component of a complex composed of TSC22D1 (via N-terminus), TGFBR1 and TGFBR2; the interaction between TSC22D1 and TGFBR1 is inhibited by SMAD7 and promoted by TGFB1. Interacts with SMAD7; the interaction requires TGF-beta and the interaction is inhibited by TGFBR1. Interacts with TPT1/fortilin; interaction results in the destabilization of TSC22D1 protein and prevents TSC22D1-mediated apoptosis. Interacts with SMAD4 (via N-terminus). Interacts with ACVRL1/ALK1, ACVR1/ALK2, BMPR1A/ALK3, ACVR1B/ALK4, BMPR1B/ALK6, ACVR2A/ACTRII, and BMPR2. Interacts with SMAD6. Interacts with TFE3; the interaction is enhanced in the presence of TGF-beta. Forms a heterodimer with TSC22D4/THG1. In terms of assembly, forms a heterodimer with TSC22D4/THG1. Interacts with histone H1-2. Interacts with GNL3. As to quaternary structure, interacts with histone H1-2. Ubiquitously expressed in adult tissues. Expressed in the postmitotic epithelial compartment at the top of intestinal mucosal villi.

The protein localises to the cytoplasm. Its subcellular location is the nucleus. It localises to the cell membrane. The protein resides in the mitochondrion. Functionally, transcriptional repressor. Acts on the C-type natriuretic peptide (CNP) promoter. Acts to promote CASP3-mediated apoptosis. Positively regulates TGF-beta signaling by interacting with SMAD7 which inhibits binding of SMAD7 to TGFBR1, preventing recruitment of SMURF ubiquitin ligases to TGFBR1 and inhibiting SMURF-mediated ubiquitination and degradation of TGFBR1. Contributes to enhancement of TGF-beta signaling by binding to and modulating the transcription activator activity of SMAD4. Promotes TGF-beta-induced transcription of COL1A2; via its interaction with TFE3 at E-boxes in the gene proximal promoter. Plays a role in the repression of hematopoietic precursor cell growth. Promotes IL2 deprivation-induced apoptosis in T-lymphocytes, via repression of TSC22D3/GILZ transcription and activation of the caspase cascade. May act to negatively regulate TGFB3 signaling and thereby inhibit cell death in mammary gland cells. Its function is as follows. Positively regulates cell death in response to TGFB3 during mammary gland involution. The chain is TSC22 domain family protein 1 from Homo sapiens (Human).